Here is a 169-residue protein sequence, read N- to C-terminus: Probable actin-related protein 2/3 complex subunit 4 (169 aa).

Belongs to the ARPC4 family. Component of the Arp2/3 complex, at least composed of arx-1, arx-2, arx-4 and arx-6.

The protein resides in the cytoplasm. Its subcellular location is the cytoskeleton. Functions as actin-binding component of the Arp2/3 complex which is involved in regulation of actin polymerization and together with an activating nucleation-promoting factor (NPF) mediates the formation of branched actin networks. Seems to contact the mother actin filament. Plays a role in time-dependent memory loss and the retention of conditioned behavior over time. In Caenorhabditis elegans, this protein is Probable actin-related protein 2/3 complex subunit 4.